A 352-amino-acid chain; its full sequence is Photosystem II D2 protein (352 aa).

A helical membrane pass occupies residues 40–60 (CAYMALGGWLTGTTFVTSWYT). Histidine 117 provides a ligand contact to chlorophyll a. A helical membrane pass occupies residues 124-140 (GFMLRQFEIARLVGIRP). The pheophytin a site is built by glutamine 129 and asparagine 142. The chain crosses the membrane as a helical span at residues 152 to 165 (VFVSVFLMYPLGQS). Histidine 197 contributes to the chlorophyll a binding site. Residues 207–227 (GALLCAIHGATVENTLFEDGD) form a helical membrane-spanning segment. Residues histidine 214 and phenylalanine 261 each contribute to the a plastoquinone site. Histidine 214 provides a ligand contact to Fe cation. Histidine 268 provides a ligand contact to Fe cation. The helical transmembrane segment at 278-294 (GLWTSSIGIIGLALNLR) threads the bilayer.

It belongs to the reaction center PufL/M/PsbA/D family. As to quaternary structure, PSII is composed of 1 copy each of membrane proteins PsbA, PsbB, PsbC, PsbD, PsbE, PsbF, PsbH, PsbI, PsbJ, PsbK, PsbL, PsbM, PsbT, PsbX, PsbY, PsbZ, Psb30/Ycf12, peripheral proteins PsbO, CyanoQ (PsbQ), PsbU, PsbV and a large number of cofactors. It forms dimeric complexes. The D1/D2 heterodimer binds P680, chlorophylls that are the primary electron donor of PSII, and subsequent electron acceptors. It shares a non-heme iron and each subunit binds pheophytin, quinone, additional chlorophylls, carotenoids and lipids. There is also a Cl(-1) ion associated with D1 and D2, which is required for oxygen evolution. The PSII complex binds additional chlorophylls, carotenoids and specific lipids. is required as a cofactor.

Its subcellular location is the cellular thylakoid membrane. The catalysed reaction is 2 a plastoquinone + 4 hnu + 2 H2O = 2 a plastoquinol + O2. In terms of biological role, photosystem II (PSII) is a light-driven water:plastoquinone oxidoreductase that uses light energy to abstract electrons from H(2)O, generating O(2) and a proton gradient subsequently used for ATP formation. It consists of a core antenna complex that captures photons, and an electron transfer chain that converts photonic excitation into a charge separation. The D1/D2 (PsbA/PsbD) reaction center heterodimer binds P680, the primary electron donor of PSII as well as several subsequent electron acceptors. D2 is needed for assembly of a stable PSII complex. The polypeptide is Photosystem II D2 protein (Synechococcus sp. (strain RCC307)).